Reading from the N-terminus, the 237-residue chain is Mannose-specific lectin alpha chain (237 aa).

Residues E8 and D10 each coordinate Mn(2+). Residues D10, Y12, N14, and D19 each contribute to the Ca(2+) site. Residue Y12 coordinates a carbohydrate. Positions 19, 24, and 34 each coordinate Mn(2+). 99–100 serves as a coordination point for a carbohydrate; the sequence is LY. D208 is a Ca(2+) binding site. R228 is an a carbohydrate binding site.

The protein belongs to the leguminous lectin family. As to quaternary structure, homotetramer. In terms of processing, the beta and gamma chains are produced by partial proteolytic processing of the lectin alpha chain by an asparaginyl endopeptidase.

In terms of biological role, D-mannose/D-glucose-binding lectin. Also binds derivatives of glucose and mannose such as more complex glycans. This chain is Mannose-specific lectin alpha chain, found in Cymbosema roseum (Dioclea purpurea).